Consider the following 73-residue polypeptide: MKTLNFCLFLVIISSLTVRVFCLNDRFLTVNDNYVICLYINKSFVNCENLCKAYMNAKDGFCRQPHCFCTDVE.

The first 22 residues, 1-22 (MKTLNFCLFLVIISSLTVRVFC), serve as a signal peptide directing secretion. An LCN-type CS-alpha/beta domain is found at 24 to 73 (NDRFLTVNDNYVICLYINKSFVNCENLCKAYMNAKDGFCRQPHCFCTDVE). 3 disulfide bridges follow: cysteine 37–cysteine 62, cysteine 47–cysteine 67, and cysteine 51–cysteine 69.

The protein belongs to the long (3 C-C) scorpion toxin superfamily. Sodium channel inhibitor family. In terms of tissue distribution, expressed by the venom gland.

It is found in the secreted. In terms of biological role, putative sodium channel toxin. This is Putative sodium channel toxin Ts39 from Tityus serrulatus (Brazilian scorpion).